Reading from the N-terminus, the 430-residue chain is Enolase (430 aa).

A (2R)-2-phosphoglycerate-binding site is contributed by Q167. E209 (proton donor) is an active-site residue. Residues D245, E286, and D313 each contribute to the Mg(2+) site. Residues K338, R367, S368, and K389 each contribute to the (2R)-2-phosphoglycerate site. Residue K338 is the Proton acceptor of the active site.

It belongs to the enolase family. It depends on Mg(2+) as a cofactor.

The protein localises to the cytoplasm. It is found in the secreted. The protein resides in the cell surface. The catalysed reaction is (2R)-2-phosphoglycerate = phosphoenolpyruvate + H2O. The protein operates within carbohydrate degradation; glycolysis; pyruvate from D-glyceraldehyde 3-phosphate: step 4/5. Catalyzes the reversible conversion of 2-phosphoglycerate (2-PG) into phosphoenolpyruvate (PEP). It is essential for the degradation of carbohydrates via glycolysis. The polypeptide is Enolase (Synechococcus sp. (strain CC9311)).